A 296-amino-acid chain; its full sequence is 4-hydroxybenzoate octaprenyltransferase (296 aa).

A run of 8 helical transmembrane segments spans residues 28–48 (PIGI…AGLG), 52–72 (LANV…GCCI), 102–122 (ALAL…CTNS), 145–167 (TYYP…FTAA), 174–196 (SAWL…YAMV), 219–239 (MIIL…GSRF), 241–261 (LGGW…WEYW), and 275–295 (FLHN…DYAL).

It belongs to the UbiA prenyltransferase family. Mg(2+) is required as a cofactor.

It localises to the cell inner membrane. It carries out the reaction all-trans-octaprenyl diphosphate + 4-hydroxybenzoate = 4-hydroxy-3-(all-trans-octaprenyl)benzoate + diphosphate. It participates in cofactor biosynthesis; ubiquinone biosynthesis. Its function is as follows. Catalyzes the prenylation of para-hydroxybenzoate (PHB) with an all-trans polyprenyl group. Mediates the second step in the final reaction sequence of ubiquinone-8 (UQ-8) biosynthesis, which is the condensation of the polyisoprenoid side chain with PHB, generating the first membrane-bound Q intermediate 3-octaprenyl-4-hydroxybenzoate. This chain is 4-hydroxybenzoate octaprenyltransferase, found in Pseudomonas putida (strain W619).